Consider the following 192-residue polypeptide: Large ribosomal subunit protein uL10 (192 aa).

It belongs to the universal ribosomal protein uL10 family. As to quaternary structure, part of the ribosomal stalk of the 50S ribosomal subunit. The N-terminus interacts with L11 and the large rRNA to form the base of the stalk. The C-terminus forms an elongated spine to which L12 dimers bind in a sequential fashion forming a multimeric L10(L12)X complex.

Functionally, forms part of the ribosomal stalk, playing a central role in the interaction of the ribosome with GTP-bound translation factors. The protein is Large ribosomal subunit protein uL10 of Gloeobacter violaceus (strain ATCC 29082 / PCC 7421).